Consider the following 250-residue polypeptide: Kallikrein-9 (250 aa).

Positions 1–15 (MKLGLLCALLSLLAG) are cleaved as a signal peptide. The region spanning 23–249 (AIGAEECRPN…YLDWIQEIME (227 aa)) is the Peptidase S1 domain. 6 disulfide bridges follow: cysteine 29–cysteine 164, cysteine 48–cysteine 64, cysteine 136–cysteine 238, cysteine 143–cysteine 210, cysteine 175–cysteine 189, and cysteine 200–cysteine 225. Active-site charge relay system residues include histidine 63 and aspartate 111. Asparagine 131 and asparagine 166 each carry an N-linked (GlcNAc...) asparagine glycan. Catalysis depends on serine 204, which acts as the Charge relay system. Asparagine 211 carries N-linked (GlcNAc...) asparagine glycosylation.

The protein belongs to the peptidase S1 family. Kallikrein subfamily. Skin, thymus, trachea, cerebellum and spinal cord.

It is found in the secreted. In Homo sapiens (Human), this protein is Kallikrein-9 (KLK9).